Reading from the N-terminus, the 387-residue chain is 1-deoxy-D-xylulose 5-phosphate reductoisomerase (387 aa).

Residues T10, G11, S12, I13, G36, R37, and N124 each contribute to the NADPH site. K125 contacts 1-deoxy-D-xylulose 5-phosphate. Position 126 (E126) interacts with NADPH. Position 150 (D150) interacts with Mn(2+). Positions 151, 152, 176, and 199 each coordinate 1-deoxy-D-xylulose 5-phosphate. E152 contacts Mn(2+). An NADPH-binding site is contributed by G205. 1-deoxy-D-xylulose 5-phosphate contacts are provided by S212, N217, K218, and E221. Residue E221 coordinates Mn(2+).

The protein belongs to the DXR family. Mg(2+) serves as cofactor. Mn(2+) is required as a cofactor.

The catalysed reaction is 2-C-methyl-D-erythritol 4-phosphate + NADP(+) = 1-deoxy-D-xylulose 5-phosphate + NADPH + H(+). It participates in isoprenoid biosynthesis; isopentenyl diphosphate biosynthesis via DXP pathway; isopentenyl diphosphate from 1-deoxy-D-xylulose 5-phosphate: step 1/6. Its function is as follows. Catalyzes the NADPH-dependent rearrangement and reduction of 1-deoxy-D-xylulose-5-phosphate (DXP) to 2-C-methyl-D-erythritol 4-phosphate (MEP). The chain is 1-deoxy-D-xylulose 5-phosphate reductoisomerase from Cyanothece sp. (strain PCC 7425 / ATCC 29141).